A 353-amino-acid chain; its full sequence is RNA 3'-terminal phosphate cyclase (353 aa).

ATP-binding positions include Gln100 and His285–Gln289. His311 (tele-AMP-histidine intermediate) is an active-site residue.

It belongs to the RNA 3'-terminal cyclase family. Type 1 subfamily.

The protein localises to the cytoplasm. The enzyme catalyses a 3'-end 3'-phospho-ribonucleotide-RNA + ATP = a 3'-end 2',3'-cyclophospho-ribonucleotide-RNA + AMP + diphosphate. Catalyzes the conversion of 3'-phosphate to a 2',3'-cyclic phosphodiester at the end of RNA. The mechanism of action of the enzyme occurs in 3 steps: (A) adenylation of the enzyme by ATP; (B) transfer of adenylate to an RNA-N3'P to produce RNA-N3'PP5'A; (C) and attack of the adjacent 2'-hydroxyl on the 3'-phosphorus in the diester linkage to produce the cyclic end product. The biological role of this enzyme is unknown but it is likely to function in some aspects of cellular RNA processing. This is RNA 3'-terminal phosphate cyclase from Nitrosospira multiformis (strain ATCC 25196 / NCIMB 11849 / C 71).